A 162-amino-acid polypeptide reads, in one-letter code: UPF0460 protein y4xD (162 aa).

Belongs to the UPF0460 family.

This chain is UPF0460 protein y4xD, found in Sinorhizobium fredii (strain NBRC 101917 / NGR234).